Consider the following 557-residue polypeptide: Multidrug transporter FLR1 (557 aa).

N-linked (GlcNAc...) asparagine glycosylation is found at Asn-33, Asn-48, and Asn-106. Over residues 44–57 the composition is skewed to low complexity; that stretch reads SESSNMSFNSGSEE. The tract at residues 44–67 is disordered; that stretch reads SESSNMSFNSGSEENSQEKSVEDL. The next 8 helical transmembrane spans lie at 113–133, 149–169, 181–201, 204–224, 238–258, 271–291, 355–375, and 387–407; these read ALIIIQTMLLTCVNYMGSSIY, VVGTLNLSLYVLGYGLGPIVF, LPVYMITFFLFTMLQIGCALA, FAGLVILRFITGVLCSPALST, LALVLGLWSIGAVAAPVLAPL, WIFWLLFFCCCATMLLLTFFF, LYIALCYGAFYLFFEAFPIVF, and GLAYFGFCVGCIFAYIILLVF. Asn-418 carries N-linked (GlcNAc...) asparagine glycosylation. 4 helical membrane passes run 426–446, 450–470, 484–506, and 521–541; these read TLILAMCIGWCIPLALFMFGW, VHWILPIISEVFFVLGCFNIF, YVASVFAGNGFARSSFAAAFPLF, and VAWGSSLVGFFTIGLWVIPFV.

It belongs to the major facilitator superfamily.

The protein localises to the cell membrane. Multidrug transporter that confers resistance to 5-flucytosine (5-FC) and clotrimazole. Also confers resistance to benomyl, but not 4-nitroquinoline-N-oxide, cycloheximide, or fluconazole. Plays direct roles in extrusion of 5-flucytosine and clotrimazole. The protein is Multidrug transporter FLR1 of Candida glabrata (strain ATCC 2001 / BCRC 20586 / JCM 3761 / NBRC 0622 / NRRL Y-65 / CBS 138) (Yeast).